Consider the following 1041-residue polypeptide: Protein SMAX1-like (1041 aa).

One can recognise a Clp R domain in the interval 8 to 188; sequence IQQTLTPEAA…KSIIEQSLSA (181 aa). Repeat stretches follow at residues 12–98 and 117–188; these read LTPE…LDRL and VSNA…SLSA. The span at 189–205 shows a compositional bias: low complexity; that stretch reads PSPCPSAAASTTTAGPG. 3 disordered regions span residues 189 to 214, 482 to 513, and 889 to 913; these read PSPC…PSPL, EAEQ…QNKA, and EGSH…VKRS. Residues 482–495 are compositionally biased toward basic and acidic residues; that stretch reads EAEQTDKPASRPEA. Positions 891–900 are enriched in polar residues; that stretch reads SHNSSDVSVE.

It belongs to the ClpA/ClpB family.

May act downstream of MAX2 to negatively regulate karrikins/strigolactone responses. Acts probably specifically in the karrikin pathway. May function in a transcriptional corepressor complex. In Oryza sativa subsp. japonica (Rice), this protein is Protein SMAX1-like.